The primary structure comprises 365 residues: Probable ethanolamine-phosphate cytidylyltransferase (365 aa).

The segment at glutamate 344–alanine 365 is disordered. Over residues alanine 355–alanine 365 the composition is skewed to polar residues.

Belongs to the cytidylyltransferase family.

The catalysed reaction is phosphoethanolamine + CTP + H(+) = CDP-ethanolamine + diphosphate. It participates in phospholipid metabolism; phosphatidylethanolamine biosynthesis; phosphatidylethanolamine from ethanolamine: step 2/3. The protein is Probable ethanolamine-phosphate cytidylyltransferase of Schizosaccharomyces pombe (strain 972 / ATCC 24843) (Fission yeast).